The primary structure comprises 651 residues: Acid beta-fructofuranosidase (651 aa).

At 1–23 (MEHHKPLLPTSSHAAPNPRTRKD) the chain is on the cytoplasmic side. Residues 1–103 (MEHHKPLLPT…LFSGEGGASE (103 aa)) constitute a propeptide, removed in mature form. The chain crosses the membrane as a helical; Signal-anchor for type II membrane protein span at residues 24–44 (LLLLLCALLFLSSLVAFGRNR). The Lumenal portion of the chain corresponds to 45 to 651 (ASNVPHDHVS…PFPFNPDQKN (607 aa)). A disordered region spans residues 48 to 76 (VPHDHVSSSASNHQQEHQSPTSLPSSKWH). Polar residues predominate over residues 54–72 (SSSASNHQQEHQSPTSLPS). Substrate contacts are provided by residues 127-130 (WMND), Gln146, Trp154, and 189-190 (WT). The active site involves Asp130. Residue Asn210 is glycosylated (N-linked (GlcNAc...) asparagine). A substrate-binding site is contributed by 253–254 (RD). A glycan (N-linked (GlcNAc...) asparagine) is linked at Asn275. Substrate-binding residues include Glu308 and Asp343. Cys500 and Cys548 are oxidised to a cystine. N-linked (GlcNAc...) asparagine glycosylation is present at Asn620.

It belongs to the glycosyl hydrolase 32 family. May be present in two forms, a 70 kDa monomer and a heterodimer of the 30 kDa and 38 kDa subunits. The ratio of the levels of the two forms within cells appears to be regulated developmentally.

The protein localises to the membrane. The protein resides in the vacuole lumen. The catalysed reaction is Hydrolysis of terminal non-reducing beta-D-fructofuranoside residues in beta-D-fructofuranosides.. It participates in glycan biosynthesis; sucrose metabolism. The chain is Acid beta-fructofuranosidase from Phaseolus vulgaris (Kidney bean).